The primary structure comprises 485 residues: Tektin-5 (485 aa).

4 coiled-coil regions span residues 114–185, 225–247, 307–385, and 421–444; these read RLTD…EVNC, QEQMRKLAQRIDIQMRDNRDAQH, QNMR…MAKE, and TIDDTLQTLKLRLRETQDTLQLLV.

It belongs to the tektin family. As to quaternary structure, microtubule inner protein component of sperm flagellar doublet microtubules. Interacts with TEKT3. Ubiquitinated, leading to its degradation. Deubiquitinated by USP16, promoting its stability.

It is found in the cytoplasm. It localises to the cytoskeleton. The protein localises to the flagellum axoneme. Sperm-specific microtubule inner protein (MIP) part of the dynein-decorated doublet microtubules (DMTs) in flagellar axoneme. Forms an extensive interaction network in different conformations that reinforces the helix bundle composed by other tektin proteins (TEKT1 to TEKT4) and MIPs to anchor the tektin bundle onto the tubulin wall of A-tubule of the sperm flagellum. This Homo sapiens (Human) protein is Tektin-5 (TEKT5).